Reading from the N-terminus, the 925-residue chain is Nuclear factor of activated T-cells, cytoplasmic 2 (925 aa).

The segment at 1-95 is disordered; sequence MNAPERQPQP…FGEPDRVGPQ (95 aa). Serine 23 carries the phosphoserine modification. Positions 26 to 34 match the 9aaTAD motif; that stretch reads DELDFSILF. Phosphoserine is present on residues serine 99, serine 107, and serine 110. Positions 111 to 116 are calcineurin-binding; sequence PRIEIT. Positions 119-199 are transactivation domain A (TAD-A); the sequence is HELIQAVGPL…CVSPNNGGPD (81 aa). 8 positions are modified to phosphoserine: serine 148, serine 168, serine 171, serine 172, serine 174, serine 175, serine 177, and serine 180. The required for cytoplasmic retention of the phosphorylated form stretch occupies residues 161–175; sequence YREPLCLSPASSGSS. A run of 2 repeats spans residues 184 to 200 and 213 to 229. Residues 184–286 are 3 X approximate SP repeats; that stretch reads SPYTSPCVSP…PQPSSHVAPQ (103 aa). The segment at 195 to 297 is disordered; that stretch reads NGGPDDLCPQ…HGSPAGYPPV (103 aa). A phosphoserine mark is found at serine 213, serine 217, serine 221, serine 236, and serine 243. Residues 214-224 show a composition bias toward polar residues; the sequence is PRTSPIMSPRT. Positions 251–253 match the Nuclear localization signal motif; the sequence is KRR. A phosphoserine mark is found at serine 255, serine 268, serine 274, serine 276, serine 280, serine 326, serine 330, and serine 363. The segment covering 264–281 has biased composition (low complexity); it reads PPGASPQRSRSPSPQPSS. One copy of the 3; approximate repeat lies at 272–286; it reads SRSPSPQPSSHVAPQ. Residues 392-574 form the RHD domain; sequence ASLPPLEWPL…NPIECSQRSA (183 aa). A DNA-binding region spans residues 421–428; sequence RAHYETEG. The short motif at 664 to 666 is the Nuclear localization signal element; it reads KRK. Serine 755, serine 757, serine 759, serine 856, and serine 859 each carry phosphoserine. The segment at 839-894 is disordered; that stretch reads PGTTRPGPPPVSQGQRLSPGSYPTVIQQQNATSQRAAKNGPPVSDQKEVLPAGVTI. A compositionally biased stretch (polar residues) spans 862–874; that stretch reads TVIQQQNATSQRA. The Nuclear export signal signature appears at 904-913; that stretch reads YLDDVNEIIR.

As to quaternary structure, member of the multicomponent NFATC transcription complex that consists of at least two components, a pre-existing cytoplasmic component NFATC2 and an inducible nuclear component NFATC1. Other members such as NFATC4, NFATC3 or members of the activating protein-1 family, MAF, GATA4 and Cbp/p300 can also bind the complex. The phosphorylated form specifically interacts with XPO1; which mediates nuclear export. NFATC proteins bind to DNA as monomers. Interacts with NFATC2IP. Interacts with FOXP3. Interacts with TBX21 ('Thr-303' phosphorylated form). Interacts with KAT2A. Interacts with HOMER2 and HOMER3; this interaction competes with calcineurin/PPP3CA-binding and hence prevents NFATC2 dephosphorylation and activation. Interacts with protein phosphatase PPP3CA/calcineurin A. Interacts with AKAP5 (via leucine zipper domain); this is required for NFATC2/NFAT1 recruitment to CRAC channels. In resting cells, phosphorylated by NFATC-kinase on at least 18 sites in the 99-363 region. Upon cell stimulation, all these sites except Ser-243 are dephosphorylated by calcineurin. Dephosphorylation induces a conformational change that simultaneously exposes an NLS and masks an NES, which results in nuclear localization. Simultaneously, Ser-53 or Ser-56 is phosphorylated; which is required for full transcriptional activity. In terms of processing, ubiquitinated in endothelial cells by RNF213 downstream of the non-canonical Wnt signaling pathway, leading to its degradation by the proteasome. As to expression, expressed in thymus, spleen, heart, testis, brain, placenta, muscle and pancreas. Isoform 1 is highly expressed in the small intestine, heart, testis, prostate, thymus, placenta and thyroid. Isoform 3 is highly expressed in stomach, uterus, placenta, trachea and thyroid.

It localises to the cytoplasm. The protein localises to the nucleus. Functionally, plays a role in the inducible expression of cytokine genes in T-cells, especially in the induction of the IL-2, IL-3, IL-4, TNF-alpha or GM-CSF. Promotes invasive migration through the activation of GPC6 expression and WNT5A signaling pathway. Is involved in the negative regulation of chondrogenesis. Recruited by AKAP5 to ORAI1 pore-forming subunit of CRAC channels in Ca(2+) signaling microdomains where store-operated Ca(2+) influx is coupled to calmodulin and calcineurin signaling and activation of NFAT-dependent transcriptional responses. In Homo sapiens (Human), this protein is Nuclear factor of activated T-cells, cytoplasmic 2 (NFATC2).